Here is a 266-residue protein sequence, read N- to C-terminus: Cytochrome c oxidase assembly factor 7 homolog (266 aa).

Sel1-like repeat units follow at residues 32-64 (PEACHLLGDYLEGIKKDFEKASKVYKSTCDDYG) and 66-104 (AKSCYKYGNYSFLGKGKSGSKGNPQVAYEYYEKGCNLND). The span at 166-179 (AVTASSGSGTSSPP) shows a compositional bias: low complexity. Positions 166 to 187 (AVTASSGSGTSSPPAGQPPLKD) are disordered. A Sel1-like 3 repeat occupies 212–247 (MYACANLSQMYARGDGIEKNEKEAEKYKKLALEMQD).

This sequence belongs to the hcp beta-lactamase family.

Functionally, required for locomotion. Probably involved in the regulation of formation/maintenance of motor neurons at presynaptic terminals at the neuromuscular junction. The polypeptide is Cytochrome c oxidase assembly factor 7 homolog (Drosophila melanogaster (Fruit fly)).